Consider the following 120-residue polypeptide: NAD(P)H-quinone oxidoreductase subunit 3 (120 aa).

3 helical membrane-spanning segments follow: residues 10–30, 64–84, and 89–109; these read FLGF…TNLI, MFAL…PWAV, and LGLL…IALA.

It belongs to the complex I subunit 3 family. As to quaternary structure, NDH-1 can be composed of about 15 different subunits; different subcomplexes with different compositions have been identified which probably have different functions.

The protein resides in the cellular thylakoid membrane. It catalyses the reaction a plastoquinone + NADH + (n+1) H(+)(in) = a plastoquinol + NAD(+) + n H(+)(out). The enzyme catalyses a plastoquinone + NADPH + (n+1) H(+)(in) = a plastoquinol + NADP(+) + n H(+)(out). Its function is as follows. NDH-1 shuttles electrons from an unknown electron donor, via FMN and iron-sulfur (Fe-S) centers, to quinones in the respiratory and/or the photosynthetic chain. The immediate electron acceptor for the enzyme in this species is believed to be plastoquinone. Couples the redox reaction to proton translocation, and thus conserves the redox energy in a proton gradient. Cyanobacterial NDH-1 also plays a role in inorganic carbon-concentration. This Prochlorococcus marinus (strain MIT 9312) protein is NAD(P)H-quinone oxidoreductase subunit 3.